The primary structure comprises 34 residues: Potassium channel toxin alpha-KTx 6.3 (34 aa).

4 disulfide bridges follow: Cys3/Cys24, Cys9/Cys29, Cys13/Cys31, and Cys19/Cys34. Residue Cys34 is modified to Cysteine amide.

Belongs to the short scorpion toxin superfamily. Potassium channel inhibitor family. Alpha-KTx 06 subfamily. Post-translationally, amidated. The amidated toxin shows 5-fold more affinity for Kv1.3/KCNA3 than the synthetic carboxylated form. Expressed by the venom gland.

It localises to the secreted. Potently blocks voltage-gated potassium channels Kv1.1/KCNA1 (IC(50)=7-11 nM) and Kv1.3/KCNA3 (IC(50)=11-29 pM). Also mildly blocks intermediate (IK) conductance calcium-activated potassium channels (KCa3.1/KCNN4) and ERG1/Kv11.1/KCNH2. Shows ability to suppress proliferation of lymphocytes, which are known to be sensitive to Kv1.3/KCNA3 homotetrameric channel block. This is Potassium channel toxin alpha-KTx 6.3 from Heterometrus spinifer (Asia giant forest scorpion).